Here is an 87-residue protein sequence, read N- to C-terminus: UPF0367 protein P9211_01391 (87 aa).

Belongs to the UPF0367 family.

This chain is UPF0367 protein P9211_01391, found in Prochlorococcus marinus (strain MIT 9211).